The chain runs to 534 residues: Serine/threonine-protein kinase 35 (534 aa).

Residues 32-176 (VESHGSLGAQ…AAAARAMDPV (145 aa)) are disordered. Low complexity-rich tracts occupy residues 39–65 (GAQA…TSRA) and 166–176 (PAAAARAMDPV). Residues 202–530 (YSLLAEIGRG…FELETRMDQV (329 aa)) form the Protein kinase domain. ATP-binding positions include 208–216 (IGRGSYGVV) and Lys-231. Asp-360 acts as the Proton acceptor in catalysis.

This sequence belongs to the protein kinase superfamily. Ser/Thr protein kinase family. In terms of assembly, interacts with PDLIM1/CLP-36. In terms of processing, autophosphorylated. As to expression, expressed in testis.

It localises to the nucleus. It is found in the nucleolus. The protein resides in the cytoplasm. It carries out the reaction L-seryl-[protein] + ATP = O-phospho-L-seryl-[protein] + ADP + H(+). The enzyme catalyses L-threonyl-[protein] + ATP = O-phospho-L-threonyl-[protein] + ADP + H(+). The sequence is that of Serine/threonine-protein kinase 35 (STK35) from Homo sapiens (Human).